The sequence spans 137 residues: Small ribosomal subunit protein uS12 (137 aa).

Residues 31–41 show a composition bias toward polar residues; the sequence is MSRKQTNNTAP. Residues 31–57 form a disordered region; the sequence is MSRKQTNNTAPQKRGVATRVGTMTPKK. Aspartate 102 bears the 3-methylthioaspartic acid mark.

The protein belongs to the universal ribosomal protein uS12 family. In terms of assembly, part of the 30S ribosomal subunit. Contacts proteins S8 and S17. May interact with IF1 in the 30S initiation complex.

With S4 and S5 plays an important role in translational accuracy. Its function is as follows. Interacts with and stabilizes bases of the 16S rRNA that are involved in tRNA selection in the A site and with the mRNA backbone. Located at the interface of the 30S and 50S subunits, it traverses the body of the 30S subunit contacting proteins on the other side and probably holding the rRNA structure together. The combined cluster of proteins S8, S12 and S17 appears to hold together the shoulder and platform of the 30S subunit. This chain is Small ribosomal subunit protein uS12, found in Oenococcus oeni (strain ATCC BAA-331 / PSU-1).